We begin with the raw amino-acid sequence, 370 residues long: Glucan endo-1,3-beta-glucosidase, basic vacuolar isoform GLB (370 aa).

The first 32 residues, 1 to 32, serve as a signal peptide directing secretion; the sequence is MSTSDKHNTPQMAAITLLGLLLVASTIEIAGA. Glutamine 33 carries the post-translational modification Pyrrolidone carboxylic acid. The active-site Proton donor is glutamate 128. Glutamate 273 serves as the catalytic Nucleophile. A propeptide spans 349–370 (removed in mature form); that stretch reads VSGGVWDSSVETNATASLISEM. Residue asparagine 361 is glycosylated (N-linked (GlcNAc...) asparagine).

The protein belongs to the glycosyl hydrolase 17 family. As to expression, is expressed primarily in epidermal cell of healthy plant, and following induction by ethylene, accumulates in mesophyll cells.

It localises to the vacuole. The catalysed reaction is Hydrolysis of (1-&gt;3)-beta-D-glucosidic linkages in (1-&gt;3)-beta-D-glucans.. Its function is as follows. Implicated in the defense of plants against pathogens. This is Glucan endo-1,3-beta-glucosidase, basic vacuolar isoform GLB from Nicotiana tabacum (Common tobacco).